The sequence spans 363 residues: S-adenosylmethionine:tRNA ribosyltransferase-isomerase (363 aa).

Belongs to the QueA family. As to quaternary structure, monomer.

It is found in the cytoplasm. It catalyses the reaction 7-aminomethyl-7-carbaguanosine(34) in tRNA + S-adenosyl-L-methionine = epoxyqueuosine(34) in tRNA + adenine + L-methionine + 2 H(+). The protein operates within tRNA modification; tRNA-queuosine biosynthesis. Functionally, transfers and isomerizes the ribose moiety from AdoMet to the 7-aminomethyl group of 7-deazaguanine (preQ1-tRNA) to give epoxyqueuosine (oQ-tRNA). This Brucella melitensis biotype 2 (strain ATCC 23457) protein is S-adenosylmethionine:tRNA ribosyltransferase-isomerase.